The following is a 312-amino-acid chain: Olfactory receptor 1D2 (312 aa).

Over 1 to 25 (MDGGNQSEGSEFLLLGMSESPEQQQ) the chain is Extracellular. The N-linked (GlcNAc...) asparagine glycan is linked to Asn-5. The chain crosses the membrane as a helical span at residues 26 to 49 (ILFWMFLSMYLVTVVGNVLIILAI). The Cytoplasmic segment spans residues 50–57 (NSDSHLHT). The chain crosses the membrane as a helical span at residues 58 to 79 (PMYFFLANLSFTDLFFVTNTIP). The Extracellular portion of the chain corresponds to 80–100 (KMLVNLQSQNKAISYAGCLTQ). Cysteines 97 and 189 form a disulfide. A helical membrane pass occupies residues 101–120 (LYFLVSLVALDNLILAVMAY). At 121–139 (DRYVAICCPLHYTTAMSPK) the chain is on the cytoplasmic side. A helical transmembrane segment spans residues 140–158 (LCILLLSLCWVLSVLYGLI). Over 159–196 (HTILMTRVTFCGSRKIHYIFCEMYVLLRMACSNIQINH) the chain is Extracellular. Asn-195 carries an N-linked (GlcNAc...) asparagine glycan. A helical transmembrane segment spans residues 197 to 219 (TVLIATGCFIFLIPFGFVIISYV). Residues 220 to 236 (LIIRAILRIPSVSKKYK) are Cytoplasmic-facing. A helical transmembrane segment spans residues 237–259 (AFSTCASHLGAVSLFYGTLCMVY). Residues 260–271 (LKPLHTFSVKDS) lie on the Extracellular side of the membrane. Residues 272–291 (VATVMYAVVTPMMNPFIYSL) form a helical membrane-spanning segment. At 292–312 (RNKDMHGALGRLLDTHFKRLT) the chain is on the cytoplasmic side.

The protein belongs to the G-protein coupled receptor 1 family.

It is found in the cell membrane. Functionally, odorant receptor. This chain is Olfactory receptor 1D2 (OR1D2), found in Gorilla gorilla gorilla (Western lowland gorilla).